The sequence spans 128 residues: Fluoride-specific ion channel FluC (128 aa).

4 helical membrane passes run 5 to 25 (IVAIFVGAGLGALLRWFLSLA), 35 to 55 (LGTLAANLIGGYVIGIAAVVF), 67 to 87 (LFVITGFLGGLTTFSTYSVEV), and 96 to 116 (FGWAFAVAALHLTGSFALTAL). The Na(+) site is built by Gly75 and Thr78.

It belongs to the fluoride channel Fluc/FEX (TC 1.A.43) family.

The protein localises to the cell inner membrane. The catalysed reaction is fluoride(in) = fluoride(out). Its activity is regulated as follows. Na(+) is not transported, but it plays an essential structural role and its presence is essential for fluoride channel function. Functionally, fluoride-specific ion channel. Important for reducing fluoride concentration in the cell, thus reducing its toxicity. The chain is Fluoride-specific ion channel FluC from Burkholderia lata (strain ATCC 17760 / DSM 23089 / LMG 22485 / NCIMB 9086 / R18194 / 383).